Consider the following 466-residue polypeptide: Cysteine--tRNA ligase (466 aa).

Zn(2+) is bound at residue Cys28. The 'HIGH' region motif lies at 30–40 (PTVYNYIHIGN). 3 residues coordinate Zn(2+): Cys208, His233, and Glu237. The 'KMSKS' region signature appears at 265–269 (KMSKS). Lys268 provides a ligand contact to ATP.

This sequence belongs to the class-I aminoacyl-tRNA synthetase family. Monomer. Zn(2+) is required as a cofactor.

The protein resides in the cytoplasm. The enzyme catalyses tRNA(Cys) + L-cysteine + ATP = L-cysteinyl-tRNA(Cys) + AMP + diphosphate. In Staphylococcus epidermidis (strain ATCC 35984 / DSM 28319 / BCRC 17069 / CCUG 31568 / BM 3577 / RP62A), this protein is Cysteine--tRNA ligase.